Here is a 488-residue protein sequence, read N- to C-terminus: MRSGAERRGSSAAAPPSSPPPGRARPAGSDVSPALPPPAASQPRARDAGDARAQPRPLFQWSKWKKRMSMSSISSGSARRPVFDDKEDVNFDHFQILRAIGKGSFGKVCIVQKRDTEKMYAMKYMNKQQCIERDEVRNVFRELEILQEIEHVFLVNLWYSFQDEEDMFMVVDLLLGGDLRYHLQQNVQFSEDTVRLYICEMALALDYLRSQHIIHRDVKPDNILLDEQGHAHLTDFNIATIIKDGERATALAGTKPYMAPEIFHSFVNGGTGYSFEVDWWSVGVMAYELLRGWRPYDIHSSNAVESLVQLFSTVSVQYVPTWSKEMVALLRKLLTVNPEHRFSSLQDMQTAPSLAHVLWDDLSEKKVEPGFVPNKGRLHCDPTFELEEMILESRPLHKKKKRLAKNKSRDSSRDSSQSENDYLQDCLDAIQQDFVIFNREKLKRSQELMSEPPPGPETSDMTDSTADSEAEPTALPMCGSICPSSGSS.

Positions M1–R56 are disordered. 3 positions are modified to phosphoserine: S10, S17, and S18. Residues A24–P33 show a composition bias toward low complexity. The region spanning F94 to L354 is the Protein kinase domain. Residues I100–V108 and K123 each bind ATP. The active-site Proton acceptor is D217. Positions H397–N406 are enriched in basic residues. Disordered stretches follow at residues H397–N420 and K443–S488.

It belongs to the protein kinase superfamily. Ser/Thr protein kinase family. It depends on Mg(2+) as a cofactor.

It carries out the reaction L-seryl-[protein] + ATP = O-phospho-L-seryl-[protein] + ADP + H(+). The enzyme catalyses L-threonyl-[protein] + ATP = O-phospho-L-threonyl-[protein] + ADP + H(+). The protein is Serine/threonine-protein kinase 32C of Mus musculus (Mouse).